The chain runs to 474 residues: Ribulose bisphosphate carboxylase large chain (474 aa).

Substrate contacts are provided by asparagine 117 and threonine 167. Catalysis depends on lysine 169, which acts as the Proton acceptor. Lysine 171 is a binding site for substrate. The Mg(2+) site is built by lysine 195, aspartate 197, and glutamate 198. Lysine 195 is modified (N6-carboxylysine). The Proton acceptor role is filled by histidine 288. Substrate-binding residues include arginine 289, histidine 321, and serine 373.

The protein belongs to the RuBisCO large chain family. Type I subfamily. As to quaternary structure, heterohexadecamer of 8 large chains and 8 small chains. Mg(2+) is required as a cofactor.

The catalysed reaction is 2 (2R)-3-phosphoglycerate + 2 H(+) = D-ribulose 1,5-bisphosphate + CO2 + H2O. It catalyses the reaction D-ribulose 1,5-bisphosphate + O2 = 2-phosphoglycolate + (2R)-3-phosphoglycerate + 2 H(+). Functionally, ruBisCO catalyzes two reactions: the carboxylation of D-ribulose 1,5-bisphosphate, the primary event in carbon dioxide fixation, as well as the oxidative fragmentation of the pentose substrate. Both reactions occur simultaneously and in competition at the same active site. This Hydrogenophilus thermoluteolus (Pseudomonas hydrogenothermophila) protein is Ribulose bisphosphate carboxylase large chain.